The following is a 378-amino-acid chain: F-box/kelch-repeat protein At4g29370 (378 aa).

Residues 23–69 (TSLFLQLPDEILVNCLARLSKSSYRSLSLVCKTFRSLLHSQPLYSAR) enclose the F-box domain. Kelch repeat units lie at residues 124 to 172 (GSKI…VLDD), 173 to 218 (KIYV…VRKI), 220 to 259 (VVGGKIYVKTGAEFMDWIYDVKRGKWSAADEYMSLLWSNS), and 260 to 305 (WCVI…NDNR).

In Arabidopsis thaliana (Mouse-ear cress), this protein is F-box/kelch-repeat protein At4g29370.